The following is a 529-amino-acid chain: MQQLRPIHRALLSVSDKSGVVEFAKALSQRGVELLSTGGTARLLAESDLKVTEVSDYTGFPEMMDGRVKTLHPKVHGGILGRRGQDDEIMAQHQISPIDMVVVNLYPFAQTVAKPDCTLADAVENIDIGGPTMVRSAAKNHKDVAIVVNSKDYKKIIEEMDNNQGSLTQSTRFDLAIKAFEHTAAYDSMIANYFGKLVPPYHGDTTQPSGRFPRTLNLNFIKKQDMRYGENSHQDAAFYIEENLSESSIATATQLQGKALSYNNIADTDAALECVKEFVEPACVIVKHANPCGVAIGKDIHEAYDSAFKTDPTSAFGGIIAFNRELDIKTAQAIIDRQFVEVIIAPSVNKDVLPVLATKQNIRVLVCGEWEDRAAGLDFKRVNGGLLVQDRDLGMVAVTNLRVVSKRHPTEQEMKDALFCWKVAKFVKSNAIVYAKNDMTIGIGAGQMSRVYSAKIAGIKAADEGLEVQGCAMASDAFFPFRDGIDAAAAVGVSCIIQPGGSIRDDEVITAADEHGIAMIFTGMRHFRH.

Residues 2–148 (QQLRPIHRAL…KNHKDVAIVV (147 aa)) form the MGS-like domain.

The protein belongs to the PurH family.

It carries out the reaction (6R)-10-formyltetrahydrofolate + 5-amino-1-(5-phospho-beta-D-ribosyl)imidazole-4-carboxamide = 5-formamido-1-(5-phospho-D-ribosyl)imidazole-4-carboxamide + (6S)-5,6,7,8-tetrahydrofolate. The catalysed reaction is IMP + H2O = 5-formamido-1-(5-phospho-D-ribosyl)imidazole-4-carboxamide. It participates in purine metabolism; IMP biosynthesis via de novo pathway; 5-formamido-1-(5-phospho-D-ribosyl)imidazole-4-carboxamide from 5-amino-1-(5-phospho-D-ribosyl)imidazole-4-carboxamide (10-formyl THF route): step 1/1. Its pathway is purine metabolism; IMP biosynthesis via de novo pathway; IMP from 5-formamido-1-(5-phospho-D-ribosyl)imidazole-4-carboxamide: step 1/1. This is Bifunctional purine biosynthesis protein PurH from Photorhabdus laumondii subsp. laumondii (strain DSM 15139 / CIP 105565 / TT01) (Photorhabdus luminescens subsp. laumondii).